Reading from the N-terminus, the 203-residue chain is Urease accessory protein UreG (203 aa).

GTP is bound at residue 11–18; that stretch reads GPVGSGKT.

The protein belongs to the SIMIBI class G3E GTPase family. UreG subfamily. Homodimer. UreD, UreF and UreG form a complex that acts as a GTP-hydrolysis-dependent molecular chaperone, activating the urease apoprotein by helping to assemble the nickel containing metallocenter of UreC. The UreE protein probably delivers the nickel.

It localises to the cytoplasm. Facilitates the functional incorporation of the urease nickel metallocenter. This process requires GTP hydrolysis, probably effectuated by UreG. In Prochlorococcus marinus (strain AS9601), this protein is Urease accessory protein UreG.